We begin with the raw amino-acid sequence, 227 residues long: Cytochrome c oxidase subunit 2 (227 aa).

The Mitochondrial intermembrane portion of the chain corresponds to 1–14 (MAYPFQLGFQDATS). The chain crosses the membrane as a helical span at residues 15 to 45 (PIMEELLHFHDHTLMIVFLISSLVLYIITLM). The Mitochondrial matrix segment spans residues 46-59 (LTTKLTHTSTMDAQ). Residues 60 to 87 (EVETVWTILPAIILILIALPSLRILYMM) traverse the membrane as a helical segment. Residues 88–227 (DEVNNPSLTV…FFEKWSASML (140 aa)) are Mitochondrial intermembrane-facing. H161, C196, E198, C200, H204, and M207 together coordinate Cu cation. Position 198 (E198) interacts with Mg(2+).

It belongs to the cytochrome c oxidase subunit 2 family. As to quaternary structure, component of the cytochrome c oxidase (complex IV, CIV), a multisubunit enzyme composed of 14 subunits. The complex is composed of a catalytic core of 3 subunits MT-CO1, MT-CO2 and MT-CO3, encoded in the mitochondrial DNA, and 11 supernumerary subunits COX4I, COX5A, COX5B, COX6A, COX6B, COX6C, COX7A, COX7B, COX7C, COX8 and NDUFA4, which are encoded in the nuclear genome. The complex exists as a monomer or a dimer and forms supercomplexes (SCs) in the inner mitochondrial membrane with NADH-ubiquinone oxidoreductase (complex I, CI) and ubiquinol-cytochrome c oxidoreductase (cytochrome b-c1 complex, complex III, CIII), resulting in different assemblies (supercomplex SCI(1)III(2)IV(1) and megacomplex MCI(2)III(2)IV(2)). Found in a complex with TMEM177, COA6, COX18, COX20, SCO1 and SCO2. Interacts with TMEM177 in a COX20-dependent manner. Interacts with COX20. Interacts with COX16. It depends on Cu cation as a cofactor.

The protein resides in the mitochondrion inner membrane. It catalyses the reaction 4 Fe(II)-[cytochrome c] + O2 + 8 H(+)(in) = 4 Fe(III)-[cytochrome c] + 2 H2O + 4 H(+)(out). In terms of biological role, component of the cytochrome c oxidase, the last enzyme in the mitochondrial electron transport chain which drives oxidative phosphorylation. The respiratory chain contains 3 multisubunit complexes succinate dehydrogenase (complex II, CII), ubiquinol-cytochrome c oxidoreductase (cytochrome b-c1 complex, complex III, CIII) and cytochrome c oxidase (complex IV, CIV), that cooperate to transfer electrons derived from NADH and succinate to molecular oxygen, creating an electrochemical gradient over the inner membrane that drives transmembrane transport and the ATP synthase. Cytochrome c oxidase is the component of the respiratory chain that catalyzes the reduction of oxygen to water. Electrons originating from reduced cytochrome c in the intermembrane space (IMS) are transferred via the dinuclear copper A center (CU(A)) of subunit 2 and heme A of subunit 1 to the active site in subunit 1, a binuclear center (BNC) formed by heme A3 and copper B (CU(B)). The BNC reduces molecular oxygen to 2 water molecules using 4 electrons from cytochrome c in the IMS and 4 protons from the mitochondrial matrix. The protein is Cytochrome c oxidase subunit 2 (MT-CO2) of Balaenoptera musculus (Blue whale).